Reading from the N-terminus, the 150-residue chain is Mediator of RNA polymerase II transcription subunit 22a (150 aa).

Residues 99-127 adopt a coiled-coil conformation; it reads SLNDHVEQRIAEFDQEAEKTNRLLARIAD.

Belongs to the Mediator complex subunit 22 family. Component of the Mediator complex.

The protein resides in the nucleus. Functionally, component of the Mediator complex, a coactivator involved in the regulated transcription of nearly all RNA polymerase II-dependent genes. Mediator functions as a bridge to convey information from gene-specific regulatory proteins to the basal RNA polymerase II transcription machinery. The Mediator complex, having a compact conformation in its free form, is recruited to promoters by direct interactions with regulatory proteins and serves for the assembly of a functional preinitiation complex with RNA polymerase II and the general transcription factors. The chain is Mediator of RNA polymerase II transcription subunit 22a (MED22A) from Arabidopsis thaliana (Mouse-ear cress).